We begin with the raw amino-acid sequence, 496 residues long: METYILSIDQGTTSSRAILFNKEGKIVHSAQKEFTQHFPQPGWVEHNANEIWGSVLAVIATVISESGISADQIAGIGITNQRETTVVWDKDTGKPVYNAIVWQSRQTSGICEELREKGYNDTFREKTGLLIDPYFSGTKVKWILDNVEGAREKAENGNLLFGTIDSWLIWKMSGGAAHVTDYSNASRTLMFNIHELKWDDELLDILGVPKSMLPEVKPSSHVYAKTVDYHFFGKNIPIAGAAGDQQSALFGQACFEEGMGKNTYGTGCFMLMNTGEKAITSDHGLLTTIAWGLDGKVEYALEGSIFVAGSAIQWLRDGMRMFQDSKESETYAERVDSADGVYVVPAFVGLGTPYWDSDVRGSVFGLTRGTTKEHFIRATLESLAYQAKDVLDAMEADSGISLKTLRVDGGAVKNNFLMQFQSDLLDVPVERPEINETTALGAAYLAGIAVGYWKDSTEIADQWNLDKQFKPEMEDEKRDELYGGWKKAVNAAMAFK.

Residue Thr12 participates in ADP binding. ATP-binding residues include Thr12, Thr13, and Ser14. Thr12 is a sn-glycerol 3-phosphate binding site. Arg16 is an ADP binding site. Sn-glycerol 3-phosphate contacts are provided by Arg82, Glu83, and Tyr134. Glycerol contacts are provided by Arg82, Glu83, and Tyr134. Position 230 is a phosphohistidine; by HPr (His230). Asp244 contacts sn-glycerol 3-phosphate. Asp244 and Gln245 together coordinate glycerol. ADP contacts are provided by Thr266 and Gly309. Residues Thr266, Gly309, Gln313, and Gly410 each contribute to the ATP site. The ADP site is built by Gly410 and Asn414.

The protein belongs to the FGGY kinase family. In terms of assembly, homotetramer and homodimer (in equilibrium). The phosphoenolpyruvate-dependent sugar phosphotransferase system (PTS), including enzyme I, and histidine-containing protein (HPr) are required for the phosphorylation, which leads to the activation of the enzyme.

It catalyses the reaction glycerol + ATP = sn-glycerol 3-phosphate + ADP + H(+). It participates in polyol metabolism; glycerol degradation via glycerol kinase pathway; sn-glycerol 3-phosphate from glycerol: step 1/1. Its activity is regulated as follows. Activated by phosphorylation and inhibited by fructose 1,6-bisphosphate (FBP). Key enzyme in the regulation of glycerol uptake and metabolism. Catalyzes the phosphorylation of glycerol to yield sn-glycerol 3-phosphate. The protein is Glycerol kinase of Bacillus velezensis (strain DSM 23117 / BGSC 10A6 / LMG 26770 / FZB42) (Bacillus amyloliquefaciens subsp. plantarum).